A 98-amino-acid chain; its full sequence is NADH-ubiquinone oxidoreductase chain 4L (98 aa).

3 helical membrane-spanning segments follow: residues 1–21 (MTPT…GMLI), 26–46 (LMAS…MTAV), and 61–81 (IIML…LVSI).

It belongs to the complex I subunit 4L family. As to quaternary structure, core subunit of respiratory chain NADH dehydrogenase (Complex I) which is composed of 45 different subunits.

The protein localises to the mitochondrion inner membrane. It carries out the reaction a ubiquinone + NADH + 5 H(+)(in) = a ubiquinol + NAD(+) + 4 H(+)(out). In terms of biological role, core subunit of the mitochondrial membrane respiratory chain NADH dehydrogenase (Complex I) which catalyzes electron transfer from NADH through the respiratory chain, using ubiquinone as an electron acceptor. Part of the enzyme membrane arm which is embedded in the lipid bilayer and involved in proton translocation. This is NADH-ubiquinone oxidoreductase chain 4L (MT-ND4L) from Papio hamadryas (Hamadryas baboon).